The sequence spans 133 residues: MSETCSSSLALLHKILHIHSHTPSVYYNICISVRILTSERLQCFFFSFFPDPNITGSGLKVPGFLFFHTFFFSKSCCQALIDSFSSDYYQFKMLEKNRKAEKINKRTIFICSFTFEYKIKSCFSCFHLSTHTN.

This is an uncharacterized protein from Saccharomyces cerevisiae (strain ATCC 204508 / S288c) (Baker's yeast).